The primary structure comprises 384 residues: N-acetyldiaminopimelate deacetylase (384 aa).

D74 is an active-site residue. E133 serves as the catalytic Proton acceptor.

The protein belongs to the peptidase M20A family. N-acetyldiaminopimelate deacetylase subfamily.

The catalysed reaction is N-acetyl-(2S,6S)-2,6-diaminopimelate + H2O = (2S,6S)-2,6-diaminopimelate + acetate. The protein operates within amino-acid biosynthesis; L-lysine biosynthesis via DAP pathway; LL-2,6-diaminopimelate from (S)-tetrahydrodipicolinate (acetylase route): step 3/3. Catalyzes the conversion of N-acetyl-diaminopimelate to diaminopimelate and acetate. This Pediococcus pentosaceus (strain ATCC 25745 / CCUG 21536 / LMG 10740 / 183-1w) protein is N-acetyldiaminopimelate deacetylase.